A 326-amino-acid polypeptide reads, in one-letter code: Tagatose 1,6-diphosphate aldolase (326 aa).

It belongs to the aldolase LacD family.

The enzyme catalyses D-tagatofuranose 1,6-bisphosphate = D-glyceraldehyde 3-phosphate + dihydroxyacetone phosphate. Its pathway is carbohydrate metabolism; D-tagatose 6-phosphate degradation; D-glyceraldehyde 3-phosphate and glycerone phosphate from D-tagatose 6-phosphate: step 2/2. This Staphylococcus aureus (strain MSSA476) protein is Tagatose 1,6-diphosphate aldolase.